We begin with the raw amino-acid sequence, 446 residues long: Citrate/sodium symporter (446 aa).

Residues 1–27 lie on the Cytoplasmic side of the membrane; the sequence is MTNMSQPPATEKKGVSDLLGFKIFGMP. Residues 28–44 traverse the membrane as a helical segment; it reads LPLYAFALITLLLSHFY. The Periplasmic segment spans residues 45 to 50; it reads NALPTD. The chain crosses the membrane as a helical span at residues 51 to 71; the sequence is IVGGFAIMFIIGAIFGEIGKR. Over 72 to 80 the chain is Cytoplasmic; the sequence is LPIFNKYIG. A helical membrane pass occupies residues 81–95; the sequence is GAPVMIFLVAAYFVY. The Periplasmic portion of the chain corresponds to 96–115; that stretch reads AGIFTQKEIDAISNVMDKSN. The chain crosses the membrane as a helical span at residues 116 to 130; it reads FLNLFIAVLITGAIL. The Cytoplasmic portion of the chain corresponds to 131–136; it reads SVNRRL. The helical transmembrane segment at 137–166 threads the bilayer; that stretch reads LLKSLLGYIPTILMGIVGASIFGIAIGLVF. Residues 167–181 lie on the Periplasmic side of the membrane; sequence GIPVDRIMMLYVLPI. Ile-181 and Gly-183 together coordinate Na(+). Positions 182–189 form an intramembrane region, helical; the sequence is MGGGNGAG. Citrate contacts are provided by Asn-186 and Gly-187. Over 190–212 the chain is Periplasmic; sequence AVPLSEIYHSVTGRSREEYYSTA. Residues 213–233 traverse the membrane as a helical segment; that stretch reads IAILTIANIFAIVFAAVLDII. Topologically, residues 234 to 264 are cytoplasmic; that stretch reads GKKHTWLSGEGELVRKASFKVEEDEKTGQIT. Residues 265 to 287 form a helical membrane-spanning segment; the sequence is HRETAVGLVLSTTCFLLAYVVAK. Over 288-299 the chain is Periplasmic; sequence KILPSIGGVAIH. The chain crosses the membrane as a helical span at residues 300–315; that stretch reads YFAWMVLIVAALNASG. Over 316 to 327 the chain is Cytoplasmic; that stretch reads LCSPEIKAGAKR. Residues 328–351 traverse the membrane as a helical segment; the sequence is LSDFFSKQLLWVLMVGVGVCYTDL. At 352–359 the chain is on the periplasmic side; the sequence is QEIINAIT. The chain crosses the membrane as a helical span at residues 360-381; the sequence is FANVVIAAIIVIGAVLGAAIGG. Over 382-398 the chain is Cytoplasmic; it reads WLMGFFPIESAITAGLC. Positions 399 and 401 each coordinate Na(+). The segment at residues 399–406 is an intramembrane region (helical); it reads MANRGGSG. Citrate contacts are provided by Arg-402, Gly-404, and Ser-405. Topologically, residues 407 to 416 are cytoplasmic; the sequence is DLEVLSACNR. A helical membrane pass occupies residues 417–438; that stretch reads MNLISYAQISSRLGGGIVLVIA. Citrate is bound at residue Arg-428. At 439–446 the chain is on the periplasmic side; that stretch reads SIVFGMMI.

This sequence belongs to the 2-hydroxycarboxylate transporter (2-HCT) (TC 2.A.24) family. As to quaternary structure, homodimer.

It is found in the cell inner membrane. It catalyses the reaction citrate(out) + 2 Na(+)(out) = citrate(in) + 2 Na(+)(in). Its activity is regulated as follows. In the absence of Na(+), transport is inhibited by the thiol reagents N-ethylmaleimide (NEM) and the methanethiosulfonate (MTS) derivatives MTSEA, MTSET and MTSES. However, inactivation by NEM, MTSES and MTSET is prevented by the presence of Na(+). In the absence of Na(+), the substrate citrate has no effect on the inactivation by permeable or impermeable thiol reagents. In contrast, when subsaturating concentrations of Na(+) are present, citrate significantly reduces inactivation, suggesting ordered binding of the substrate and co-ion; citrate is bound after Na(+). The membrane impermeable bulky maleimide AmdiS does not inactivate the transporter in right-side-out membrane vesicles. The apparent affinity for Na(+) decreases with increasing proton concentration. Protons cannot replace Na(+) in the translocation step but the decrease in apparent affinity for Na(+) towards lower pH suggests that protons can compete with Na(+) for the cation-binding sites. Secondary active transporter that catalyzes the uptake of citrate across the membrane with the concomitant uptake of sodium. There are conflicting data regarding exact substrate stoichiometry: the sodium/citrate stoichiometry was predicted to be 1, but the latest studies suggest that CitS transports citrate in symport with 2 sodium ions. Transports citrate as a divalent citrate anion, H-citrate(2-). Shows narrow substrate specificity and is very specific, transporting only citrate and to a low extent citromalate. Symport of Na(+) is absolutely required in the range pH 5-7 because no uptake can be detected in the absence of Na(+). Lithium can replace Na(+) in the symport reaction but it takes about a 200-fold higher concentration of Li(+) over Na(+) to achieve the same rate of uptake. In Klebsiella pneumoniae, this protein is Citrate/sodium symporter.